A 229-amino-acid polypeptide reads, in one-letter code: 23 kDa piroplasm membrane protein (229 aa).

The N-terminal stretch at 1-19 (MNKYFKVFFFVLLTHALKS) is a signal peptide. The Extracellular portion of the chain corresponds to 20-203 (ALIFGQATLQ…EKEDTNKKKY (184 aa)). A helical transmembrane segment spans residues 204-224 (VLMVVVVVVFVVVASLVVFLV). The Cytoplasmic portion of the chain corresponds to 225-229 (KFCLK).

It localises to the membrane. The polypeptide is 23 kDa piroplasm membrane protein (Theileria parva (East coast fever infection agent)).